The following is a 443-amino-acid chain: Phosphoglucosamine mutase (443 aa).

S102 functions as the Phosphoserine intermediate in the catalytic mechanism. Mg(2+)-binding residues include S102, D241, D243, and D245. S102 carries the phosphoserine modification.

The protein belongs to the phosphohexose mutase family. Mg(2+) serves as cofactor. Post-translationally, activated by phosphorylation.

It carries out the reaction alpha-D-glucosamine 1-phosphate = D-glucosamine 6-phosphate. Catalyzes the conversion of glucosamine-6-phosphate to glucosamine-1-phosphate. This Acinetobacter baylyi (strain ATCC 33305 / BD413 / ADP1) protein is Phosphoglucosamine mutase.